We begin with the raw amino-acid sequence, 606 residues long: KH domain-containing protein At4g18375 (606 aa).

The segment covering M1–I10 has biased composition (basic residues). The segment at M1–S26 is disordered. 5 consecutive KH domains span residues L35–T99, N138–V210, E311–V380, N394–I455, and S535–V599.

The protein localises to the nucleus. This Arabidopsis thaliana (Mouse-ear cress) protein is KH domain-containing protein At4g18375.